Reading from the N-terminus, the 498-residue chain is Neoxanthin synthase, chloroplastic (498 aa).

Residues 1–33 (METLLKPLTSLLLSSPTPHRSIFQQNPPSLNPT) constitute a chloroplast transit peptide. The tract at residues 16-38 (PTPHRSIFQQNPPSLNPTTKKKS) is disordered. Residues 22-33 (IFQQNPPSLNPT) are compositionally biased toward polar residues. 84–112 (VIIIGAGPAGLRLAEHVSKYGIKVCCVDP) contacts NAD(+).

This sequence belongs to the lycopene cyclase family.

It is found in the plastid. It localises to the chloroplast. It catalyses the reaction all-trans-violaxanthin = all-trans-neoxanthin. It participates in carotenoid biosynthesis; neoxanthin biosynthesis. Involved in the synthesis of neoxanthin, the last product of carotenoid synthesis and a precursor of abscisic acid. The protein is Neoxanthin synthase, chloroplastic (NXS) of Solanum tuberosum (Potato).